The sequence spans 644 residues: MVKLGKKEQQKYRTEGYDLDFISRVQPQGGIKFNEKYIAQGDCYVACLHVYSLAEDIPPLWLTALMNNKDTISSVDVATANKEEVVKDINRSITELKDRMTSERRSTDRDDAHWELQNLTDFARSITQQGEIVKLVKLRIYIYDPVLEQLEKRIGDIKKEIAGQNYKAQVYVFKQKEEWQTLFASYDDQIEYLGVKSGYPLPSKNIGFGIPFHHQDLKDPRGIYLGQTSTGGAFILDPFFSTGTRTSFSGFIFGKMGAGKSTLLKQLEEGLVAKDCFIRGFDKARDYYTVVQQQGGKIIDLSGVQDSEEVETGMINPLEVFATKITNTGAVDEKGSFIQHISKVTNMIRFLNTEFDDTVIQEFRKHLYAFYIEWGLVPQKGSDRPYKVTGYPPNHYPILEDFYKYLSNLKLEAGATPQRHRDLEAIKLQVEDMITVYGDMFNGHTTLKNFENEQIVFFDIDGISKYDKSVFNCQLFTALTLIWSHALKNGRQMKYLREEKNLSIEDVKYFMVFLDECHNVINSQNEFANRYVLEFEREMRKFFAGIFFATQSPQEMLPPPGSTVDVSTMKAIFELTQYKIFLNMDNSVLETLKSVLGESLTESEFRILPELKRGEAIVQVSSTETYNVMFDPDEKQLERFKGGQ.

Residue Gly254–Ser261 coordinates ATP.

This is an uncharacterized protein from Bacillus anthracis.